Reading from the N-terminus, the 237-residue chain is Uridylate kinase (237 aa).

12 to 15 provides a ligand contact to ATP; it reads KLSG. Residues 20-25 form an involved in allosteric activation by GTP region; that stretch reads GDEGFG. A UMP-binding site is contributed by Gly-54. ATP-binding residues include Gly-55 and Arg-59. UMP-binding positions include Asp-74 and 135-142; that span reads TGSPFFTT. Residues Thr-162, Tyr-168, and Asp-171 each contribute to the ATP site.

The protein belongs to the UMP kinase family. Homohexamer.

It is found in the cytoplasm. The enzyme catalyses UMP + ATP = UDP + ADP. The protein operates within pyrimidine metabolism; CTP biosynthesis via de novo pathway; UDP from UMP (UMPK route): step 1/1. With respect to regulation, allosterically activated by GTP. Inhibited by UTP. Functionally, catalyzes the reversible phosphorylation of UMP to UDP. The chain is Uridylate kinase from Actinobacillus pleuropneumoniae serotype 5b (strain L20).